Reading from the N-terminus, the 346-residue chain is Protein-glutamate methylesterase/protein-glutamine glutaminase (346 aa).

In terms of domain architecture, Response regulatory spans 6 to 123 (KVLVVDDSAF…SLDLEKVRDL (118 aa)). D57 bears the 4-aspartylphosphate mark. A CheB-type methylesterase domain is found at 155–346 (PFDKTIIVIG…ADSIVRQCKR (192 aa)). Catalysis depends on residues S166, H193, and D289.

Belongs to the CheB family. Post-translationally, phosphorylated by CheA. Phosphorylation of the N-terminal regulatory domain activates the methylesterase activity.

It is found in the cytoplasm. The enzyme catalyses [protein]-L-glutamate 5-O-methyl ester + H2O = L-glutamyl-[protein] + methanol + H(+). It catalyses the reaction L-glutaminyl-[protein] + H2O = L-glutamyl-[protein] + NH4(+). In terms of biological role, involved in chemotaxis. Part of a chemotaxis signal transduction system that modulates chemotaxis in response to various stimuli. Catalyzes the demethylation of specific methylglutamate residues introduced into the chemoreceptors (methyl-accepting chemotaxis proteins or MCP) by CheR. Also mediates the irreversible deamidation of specific glutamine residues to glutamic acid. This Halalkalibacterium halodurans (strain ATCC BAA-125 / DSM 18197 / FERM 7344 / JCM 9153 / C-125) (Bacillus halodurans) protein is Protein-glutamate methylesterase/protein-glutamine glutaminase.